We begin with the raw amino-acid sequence, 334 residues long: MQTKVNELLKPRHIEVTSVSDRQAKVVLEPLERGFGHTLGNALRRILLSSIPGAAVVEAEIEGVLHEYTSIEGVQEDVVDILLNLKGIALRMHNRDEATLTLKKKGPGVVTAGDITLDHDVEIVNPEHVIAHLTKNGELSMSLKLGRGRGYQPVTARRSSESEDRPIGRLMLDASFSPIRRVAYKVESARVEQRTDMDRLVIELETNGTVEADDAIRQAAGILQSQLAAFVELQGDESTVTESKQMEIDPILLRPVDDLELTVRSANCLKAENIYYIGDLIQRTEVELLKTPNLGKKSLTEIKDVLASHGLSMGMRLENWPPPGLKDQDKKASG.

An alpha N-terminal domain (alpha-NTD) region spans residues 1–234 (MQTKVNELLK…SQLAAFVELQ (234 aa)). Positions 248–334 (IDPILLRPVD…LKDQDKKASG (87 aa)) are alpha C-terminal domain (alpha-CTD).

It belongs to the RNA polymerase alpha chain family. In terms of assembly, homodimer. The RNAP catalytic core consists of 2 alpha, 1 beta, 1 beta' and 1 omega subunit. When a sigma factor is associated with the core the holoenzyme is formed, which can initiate transcription.

The enzyme catalyses RNA(n) + a ribonucleoside 5'-triphosphate = RNA(n+1) + diphosphate. Functionally, DNA-dependent RNA polymerase catalyzes the transcription of DNA into RNA using the four ribonucleoside triphosphates as substrates. In Thioalkalivibrio sulfidiphilus (strain HL-EbGR7), this protein is DNA-directed RNA polymerase subunit alpha.